The chain runs to 499 residues: UDP-N-acetylmuramoylalanine--D-glutamate ligase (499 aa).

129–135 (GTNGKTT) provides a ligand contact to ATP.

The protein belongs to the MurCDEF family.

The protein localises to the cytoplasm. The enzyme catalyses UDP-N-acetyl-alpha-D-muramoyl-L-alanine + D-glutamate + ATP = UDP-N-acetyl-alpha-D-muramoyl-L-alanyl-D-glutamate + ADP + phosphate + H(+). It participates in cell wall biogenesis; peptidoglycan biosynthesis. Functionally, cell wall formation. Catalyzes the addition of glutamate to the nucleotide precursor UDP-N-acetylmuramoyl-L-alanine (UMA). The sequence is that of UDP-N-acetylmuramoylalanine--D-glutamate ligase from Ralstonia nicotianae (strain ATCC BAA-1114 / GMI1000) (Ralstonia solanacearum).